The chain runs to 697 residues: Putative ATP-dependent RNA helicase an3 (697 aa).

A disordered region spans residues 27 to 189 (ESGVAGTKGR…PLAPNDRVEQ (163 aa)). 3 stretches are compositionally biased toward basic and acidic residues: residues 89–111 (GRSD…DKDA), 135–144 (RRTDDRRQDG), and 151–170 (RSDK…WSDD). Positions 221-249 (ESFHDVTMGEIIMGNIQLTRYTRPTPVQK) match the Q motif motif. Residues 241–248 (YTRPTPVQ) and 265–272 (AQTGSGKT) each bind ATP. The region spanning 252–444 (IPIIIEKRDL…RDFLDEYIFL (193 aa)) is the Helicase ATP-binding domain. The DEAD box signature appears at 388-391 (DEAD). Residues 455–616 (NITQKVVWVE…EVPSWLENMA (162 aa)) enclose the Helicase C-terminal domain. Residues 619 to 666 (QHHKSSSRGRSKSRFSGGFGAKDYRQSSGAGSSFGSSRGGRSSGHGGS) form a disordered region. Residues 622 to 631 (KSSSRGRSKS) show a composition bias toward basic residues. The span at 645 to 654 (SSGAGSSFGS) shows a compositional bias: low complexity. Over residues 655 to 666 (SRGGRSSGHGGS) the composition is skewed to gly residues.

Belongs to the DEAD box helicase family. DDX3/DED1 subfamily.

It localises to the cell membrane. Its subcellular location is the nucleus. It is found in the cytoplasm. The protein resides in the stress granule. The protein localises to the inflammasome. It localises to the cell projection. Its subcellular location is the lamellipodium. It catalyses the reaction ATP + H2O = ADP + phosphate + H(+). Functionally, multifunctional ATP-dependent RNA helicase. The ATPase activity can be stimulated by various ribo-and deoxynucleic acids indicative for a relaxed substrate specificity. In vitro can unwind partially double-stranded DNA with a preference for 5'-single-stranded DNA overhangs. Involved in many cellular processes, which do not necessarily require its ATPase/helicase catalytic activities. Involved in the regulation of transcription and translation initiation. Involved in innate immunity. Involved in both stress and inflammatory responses. May negatively regulate extrinsic apoptotic signaling pathway via death domain receptors. May be involved in mitotic chromosome segregation. Required for canonical Wnt signaling involved in anteroposterior neural patterning. The protein is Putative ATP-dependent RNA helicase an3 (an3) of Xenopus laevis (African clawed frog).